The primary structure comprises 250 residues: Probable transcriptional regulatory protein Ctha_1786 (250 aa).

The protein belongs to the TACO1 family.

It is found in the cytoplasm. The chain is Probable transcriptional regulatory protein Ctha_1786 from Chloroherpeton thalassium (strain ATCC 35110 / GB-78).